We begin with the raw amino-acid sequence, 373 residues long: D-alanine--D-alanine ligase (373 aa).

The 208-residue stretch at 156–363 (KKLLAADGLP…YPTLLATMIE (208 aa)) folds into the ATP-grasp domain. 184 to 239 (CERLGLPVFVKPARGGSSIGVSRVSSWDQLPAAVARARRHDPKVIVEAAISGRELE) contacts ATP. Mg(2+) contacts are provided by Asp-318, Glu-330, and Asn-332.

This sequence belongs to the D-alanine--D-alanine ligase family. The cofactor is Mg(2+). Mn(2+) is required as a cofactor.

The protein resides in the cytoplasm. It carries out the reaction 2 D-alanine + ATP = D-alanyl-D-alanine + ADP + phosphate + H(+). The protein operates within cell wall biogenesis; peptidoglycan biosynthesis. Functionally, cell wall formation. This is D-alanine--D-alanine ligase from Mycobacterium tuberculosis (strain ATCC 25177 / H37Ra).